Here is a 408-residue protein sequence, read N- to C-terminus: Intracellular coagulation inhibitor 2 (408 aa).

An N-terminal signal peptide occupies residues 1-22; the sequence is MLSRRTLDCCLVMLIVSTTFCQ. The cysteines at positions 50 and 249 are disulfide-linked. N174 carries N-linked (GlcNAc...) asparagine glycosylation.

It belongs to the serpin family. In terms of assembly, monomer. Forms a covalent heterodimer with clotting factor C chain B. Forms a covalent heterodimer with proclotting enzyme heavy chain. As to expression, specifically expressed in hemocytes (at protein level).

It localises to the secreted. Its function is as follows. Serine protease inhibitor that inhibits proclotting enzyme and to a lesser extent clotting factor C and clotting factor G. This Tachypleus tridentatus (Japanese horseshoe crab) protein is Intracellular coagulation inhibitor 2.